A 744-amino-acid chain; its full sequence is Protein pthb1 homolog (744 aa).

Over residues 722–733 (EHSPKELPKIRE) the composition is skewed to basic and acidic residues. Residues 722–744 (EHSPKELPKIREEEEEEEQQVTA) are disordered. Over residues 734–744 (EEEEEEQQVTA) the composition is skewed to acidic residues.

Part of BBSome complex, that contains bbs-1, bbs-2, bbs-4, bbs-5, osm-12, bbs-8/ttc-8 and bbs-9. Interacts with bbs-1.

Its function is as follows. Component of the BBSome complex. The BBSome complex is thought to function as a coat complex required for sorting of specific membrane proteins to the primary cilia. The BBSome complex is required for ciliogenesis but is dispensable for centriolar satellite function. Required for proper BBSome complex assembly and its ciliary localization. Required for cilia biogenesis and both the assembly and movement of intraflagellar transport proteins along the ciliary axoneme. In ciliated sensory neurons, required for the sensation of nitric oxide and avoidance of NO-producing organisms like P.aeruginosa. The sequence is that of Protein pthb1 homolog from Caenorhabditis elegans.